We begin with the raw amino-acid sequence, 509 residues long: Photosystem II CP47 reaction center protein (509 aa).

6 consecutive transmembrane segments (helical) span residues 21–36 (SVHL…WAGS), 101–115 (IVLS…VWHW), 140–156 (GIHL…FGAF), 203–218 (IAAG…FHLT), 237–252 (VLSS…AFVV), and 457–472 (VFAL…HGAR).

Belongs to the PsbB/PsbC family. PsbB subfamily. In terms of assembly, PSII is composed of 1 copy each of membrane proteins PsbA, PsbB, PsbC, PsbD, PsbE, PsbF, PsbH, PsbI, PsbJ, PsbK, PsbL, PsbM, PsbT, PsbX, PsbY, PsbZ, Psb30/Ycf12, peripheral proteins PsbO, CyanoQ (PsbQ), PsbU, PsbV and a large number of cofactors. It forms dimeric complexes. The cofactor is Binds multiple chlorophylls. PSII binds additional chlorophylls, carotenoids and specific lipids..

Its subcellular location is the cellular thylakoid membrane. In terms of biological role, one of the components of the core complex of photosystem II (PSII). It binds chlorophyll and helps catalyze the primary light-induced photochemical processes of PSII. PSII is a light-driven water:plastoquinone oxidoreductase, using light energy to abstract electrons from H(2)O, generating O(2) and a proton gradient subsequently used for ATP formation. The protein is Photosystem II CP47 reaction center protein of Nostoc sp. (strain PCC 7120 / SAG 25.82 / UTEX 2576).